Consider the following 213-residue polypeptide: Translation initiation factor IF-3 (213 aa).

The interval 178 to 213 (VKTLIKSEKPEKPEKPEKSEKTEKQGPSTPPAPSAS) is disordered. Positions 182–201 (IKSEKPEKPEKPEKSEKTEK) are enriched in basic and acidic residues.

The protein belongs to the IF-3 family. In terms of assembly, monomer.

It localises to the cytoplasm. Its function is as follows. IF-3 binds to the 30S ribosomal subunit and shifts the equilibrium between 70S ribosomes and their 50S and 30S subunits in favor of the free subunits, thus enhancing the availability of 30S subunits on which protein synthesis initiation begins. This chain is Translation initiation factor IF-3, found in Solibacter usitatus (strain Ellin6076).